The primary structure comprises 584 residues: Aspartate--tRNA(Asp/Asn) ligase (584 aa).

E177 is a binding site for L-aspartate. The tract at residues Q201–K204 is aspartate. R223 provides a ligand contact to L-aspartate. Residues R223 to E225 and Q232 each bind ATP. H447 serves as a coordination point for L-aspartate. Position 481 (E481) interacts with ATP. Residue R488 coordinates L-aspartate. ATP is bound at residue G533–R536.

This sequence belongs to the class-II aminoacyl-tRNA synthetase family. Type 1 subfamily. Homodimer.

It localises to the cytoplasm. The catalysed reaction is tRNA(Asx) + L-aspartate + ATP = L-aspartyl-tRNA(Asx) + AMP + diphosphate. Functionally, aspartyl-tRNA synthetase with relaxed tRNA specificity since it is able to aspartylate not only its cognate tRNA(Asp) but also tRNA(Asn). Reaction proceeds in two steps: L-aspartate is first activated by ATP to form Asp-AMP and then transferred to the acceptor end of tRNA(Asp/Asn). The sequence is that of Aspartate--tRNA(Asp/Asn) ligase from Chlamydia abortus (strain DSM 27085 / S26/3) (Chlamydophila abortus).